The chain runs to 207 residues: MIRVAIPTGRMLEQALDFLRNFDDRLLDEEKGRKLRIHGERFEVFLAKPWDLPLYVEERVVDLGIIGRDVIWEQEKNVVNLISLPFGYCKMVIAGYPYVSLKGNGKEIRIATKYENITKKLLENRWGKIKIIKLNGSVELGPILNISDLIVDIVETGKTLRDNGLEVKEVLFESSACLISNVVSFAYLRKEILSFVKEVRKLNDKCN.

Belongs to the ATP phosphoribosyltransferase family. Short subfamily. In terms of assembly, heteromultimer composed of HisG and HisZ subunits.

Its subcellular location is the cytoplasm. The catalysed reaction is 1-(5-phospho-beta-D-ribosyl)-ATP + diphosphate = 5-phospho-alpha-D-ribose 1-diphosphate + ATP. Its pathway is amino-acid biosynthesis; L-histidine biosynthesis; L-histidine from 5-phospho-alpha-D-ribose 1-diphosphate: step 1/9. Catalyzes the condensation of ATP and 5-phosphoribose 1-diphosphate to form N'-(5'-phosphoribosyl)-ATP (PR-ATP). Has a crucial role in the pathway because the rate of histidine biosynthesis seems to be controlled primarily by regulation of HisG enzymatic activity. The polypeptide is ATP phosphoribosyltransferase (hisG) (Dictyoglomus turgidum (strain DSM 6724 / Z-1310)).